A 227-amino-acid polypeptide reads, in one-letter code: Leucyl/phenylalanyl-tRNA--protein transferase (227 aa).

This sequence belongs to the L/F-transferase family.

It localises to the cytoplasm. It carries out the reaction N-terminal L-lysyl-[protein] + L-leucyl-tRNA(Leu) = N-terminal L-leucyl-L-lysyl-[protein] + tRNA(Leu) + H(+). The enzyme catalyses N-terminal L-arginyl-[protein] + L-leucyl-tRNA(Leu) = N-terminal L-leucyl-L-arginyl-[protein] + tRNA(Leu) + H(+). It catalyses the reaction L-phenylalanyl-tRNA(Phe) + an N-terminal L-alpha-aminoacyl-[protein] = an N-terminal L-phenylalanyl-L-alpha-aminoacyl-[protein] + tRNA(Phe). In terms of biological role, functions in the N-end rule pathway of protein degradation where it conjugates Leu, Phe and, less efficiently, Met from aminoacyl-tRNAs to the N-termini of proteins containing an N-terminal arginine or lysine. This is Leucyl/phenylalanyl-tRNA--protein transferase from Afipia carboxidovorans (strain ATCC 49405 / DSM 1227 / KCTC 32145 / OM5) (Oligotropha carboxidovorans).